The primary structure comprises 585 residues: Polyadenylate-binding protein, cytoplasmic and nuclear (585 aa).

Residues 14 to 37 (QLKIEEQTAPTTTESETPKVETSG) are disordered. 4 consecutive RRM domains span residues 38–116 (ASLY…WSQR), 126–203 (GNIY…LHVS), 219–296 (TNVY…RAQK), and 322–399 (VNLF…IAQR). In terms of domain architecture, PABC spans 488-567 (GQFPRNGQQQ…AHAAYQKFKE (80 aa)).

This sequence belongs to the polyadenylate-binding protein type-1 family.

Its subcellular location is the cytoplasm. The protein resides in the nucleus. Binds the poly(A) tail of mRNA. Appears to be an important mediator of the multiple roles of the poly(A) tail in mRNA biogenesis, stability and translation. In the nucleus, involved in both mRNA cleavage and polyadenylation. Is also required for efficient mRNA export to the cytoplasm. Acts in concert with a poly(A)-specific nuclease (PAN) to affect poly(A) tail shortening, which may occur concomitantly with either nucleocytoplasmic mRNA transport or translational initiation. In the cytoplasm, stimulates translation initiation and regulates mRNA decay through translation termination-coupled poly(A) shortening, probably mediated by PAN. In Eremothecium gossypii (strain ATCC 10895 / CBS 109.51 / FGSC 9923 / NRRL Y-1056) (Yeast), this protein is Polyadenylate-binding protein, cytoplasmic and nuclear (PAB1).